A 340-amino-acid chain; its full sequence is Zinc finger protein 367 (340 aa).

A disordered region spans residues 101-140 (GAPQSSASVAAVSGGEDEEEASSPDSGHLKDGIRRGRPRA). Positions 127-140 (GHLKDGIRRGRPRA) are enriched in basic and acidic residues. C2H2-type zinc fingers lie at residues 157–179 (IRCN…KRTH) and 185–209 (YLCD…QRLH). A disordered region spans residues 280-317 (KGKLVQKADQEQQDPLEYLQSDEEDDEKSGAQRRLQEQ). Positions 299–332 (QSDEEDDEKSGAQRRLQEQRERLHGALALIELAN) form a coiled coil. Position 300 is a phosphoserine (Ser300). Positions 307 to 317 (KSGAQRRLQEQ) are enriched in basic and acidic residues.

This sequence belongs to the krueppel C2H2-type zinc-finger protein family. As to expression, expressed in bone marrow and ovary.

The protein resides in the nucleus. Transcriptional activator. Isoform 1 may be involved in transcriptional activation of erythroid genes. This is Zinc finger protein 367 (Znf367) from Mus musculus (Mouse).